The primary structure comprises 316 residues: Serpentine receptor class gamma-4 (316 aa).

The next 7 helical transmembrane spans lie at 21–41, 50–70, 99–121, 140–160, 188–208, 229–249, and 258–278; these read FVYL…IWGT, SFFT…FLDV, IVYP…LSIN, MKKV…NVII, FQII…SITL, TAWI…FAFF, and IFYI…PIVM.

It belongs to the nematode receptor-like protein srg family.

Its subcellular location is the membrane. In Caenorhabditis elegans, this protein is Serpentine receptor class gamma-4 (srg-4).